The chain runs to 1080 residues: Presequence protease 1, chloroplastic/mitochondrial (1080 aa).

The N-terminal 85 residues, Met1–Ala85, are a transit peptide targeting the chloroplast and mitochondrion. Val86 is modified (N-acetylvaline). His162 contributes to the Zn(2+) binding site. The Proton acceptor role is filled by Glu165. Residue His166 participates in Zn(2+) binding. Glu240 is a catalytic residue. Glu262 provides a ligand contact to Zn(2+). The stretch at Glu571 to Thr612 forms a coiled coil. Arg705 provides a ligand contact to Mg(2+).

Belongs to the peptidase M16 family. PreP subfamily. Homodimer. Zn(2+) is required as a cofactor. It depends on Mg(2+) as a cofactor. As to expression, expressed only in siliques and flowers.

The protein resides in the plastid. Its subcellular location is the chloroplast stroma. It is found in the mitochondrion matrix. Inactive in the absence of MgCl(2) and CaCl(2) and full activation at 10 mM concentrations of either ion. Completely inhibited by the metal chelator orthophenanthroline, but not affected by phenylmethylsulfonyl fluoride (PMSF) or N-ethylmaleimide (NEM). In terms of biological role, ATP-independent protease that degrades both mitochondrial and chloroplastic transit peptides after their cleavage. Also degrades other unstructured peptides. Specific for peptides in the range of 10 to 65 residues. Shows a preference for cleavage after small polar residues and before basic residues, with a bias for positively charged amino acid residues. The protein is Presequence protease 1, chloroplastic/mitochondrial (PREP1) of Arabidopsis thaliana (Mouse-ear cress).